The sequence spans 464 residues: Sulfoacetaldehyde dehydrogenase (acylating) (464 aa).

Cys-241 (nucleophile) is an active-site residue.

The protein belongs to the aldehyde dehydrogenase family.

It catalyses the reaction sulfoacetaldehyde + NADP(+) + CoA = sulfoacetyl-CoA + NADPH + H(+). Functionally, involved in the degradation of sulfoacetate. Catalyzes the conversion of sulfoacetyl-CoA and NADPH to sulfoacetaldehyde, CoA and NADP(+). A much lower level of activity (1%) is observed when NADP(+) is replaced with NAD(+). The chain is Sulfoacetaldehyde dehydrogenase (acylating) from Bilophila wadsworthia (strain 3_1_6).